A 109-amino-acid polypeptide reads, in one-letter code: EPIDERMAL PATTERNING FACTOR-like protein 4 (109 aa).

A signal peptide spans 1–26 (MGTFRRRRRFLLAALVTFALLHLFSA). 3 cysteine pairs are disulfide-bonded: Cys-66/Cys-100, Cys-70/Cys-76, and Cys-73/Cys-102.

It belongs to the plant cysteine rich small secretory peptide family. Epidermal patterning factor subfamily. In terms of assembly, interacts with ERECTA. Expressed at the base of the apical meristem at 3 days after germination. Not detected in the hypocotyl. Expressed in developing stems soon after bolting, in inflorescence stems and in young siliques.

Its subcellular location is the secreted. Functionally, acts primarily as positive regulator of inflorescence growth. Endodermal expression is sufficient for proper inflorescence architecture. Redundantly involved with EPFL6 in procambial development regulation. Controls stomatal patterning. Mediates stomatal development inhibition. TMM (AC Q9SSD1) functions to dampen or block CLL2 signaling. Acts as a growth-regulatory ligand for ERECTA family receptors. This is EPIDERMAL PATTERNING FACTOR-like protein 4 from Arabidopsis thaliana (Mouse-ear cress).